A 492-amino-acid chain; its full sequence is Sestrin-1 (492 aa).

Residues 71 to 252 are N-terminal domain; may mediate the alkylhydroperoxide reductase activity; sequence FADSFAALGR…ICDITNGNHS (182 aa). C130 (cysteine sulfenic acid (-SOH) intermediate) is an active-site residue. Phosphoserine occurs at positions 293 and 314. A C-terminal domain; mediates TORC1 regulation region spans residues 321 to 492; it reads PARDVSRHFE…ALRAITRYMT (172 aa). L-leucine is bound by residues 386–389, T398, and E463; that span reads TYNT.

This sequence belongs to the sestrin family. In terms of assembly, interacts with the GATOR2 complex which is composed of MIOS, SEC13, SEH1L, WDR24 and WDR59; the interaction is negatively regulated by leucine. Interacts with RRAGA, RRAGB, RRAGC and RRAGD; may function as a guanine nucleotide dissociation inhibitor for RRAGs and regulate them. Interacts with KEAP1, RBX1 and SQSTM1; in the SQSTM1-dependent autophagic degradation of KEAP1. May interact with PRDX1.

The protein localises to the nucleus. The protein resides in the cytoplasm. The enzyme catalyses a hydroperoxide + L-cysteinyl-[protein] = S-hydroxy-L-cysteinyl-[protein] + an alcohol. Functions as an intracellular leucine sensor that negatively regulates the TORC1 signaling pathway through the GATOR complex. In absence of leucine, binds the GATOR subcomplex GATOR2 and prevents TORC1 signaling. Binding of leucine to SESN2 disrupts its interaction with GATOR2 thereby activating the TORC1 signaling pathway. This stress-inducible metabolic regulator may also play a role in protection against oxidative and genotoxic stresses. May positively regulate the transcription by NFE2L2 of genes involved in the response to oxidative stress by facilitating the SQSTM1-mediated autophagic degradation of KEAP1. Moreover, may prevent the accumulation of reactive oxygen species (ROS) through the alkylhydroperoxide reductase activity born by the N-terminal domain of the protein. Was originally reported to contribute to oxidative stress resistance by reducing PRDX1. However, this could not be confirmed. The sequence is that of Sestrin-1 from Macaca fascicularis (Crab-eating macaque).